Consider the following 248-residue polypeptide: Aquaporin TIP2-3 (248 aa).

2 consecutive transmembrane segments (helical) span residues 20–40 (AYVA…GSAI) and 54–74 (AGLV…VSMA). The short motif at 83 to 85 (NPA) is the NPA 1 element. A run of 3 helical transmembrane segments spans residues 97 to 119 (TILT…CFLL), 141 to 161 (GVVM…ATAA), and 168 to 188 (LGTI…LAAG). The NPA 2 motif lies at 196-198 (NPA). Residues 217–237 (WVGPLVGGGLAGLVYGDVFIA) form a helical membrane-spanning segment.

It belongs to the MIP/aquaporin (TC 1.A.8) family. TIP (TC 1.A.8.10) subfamily. Specifically expressed in roots.

Its subcellular location is the cell membrane. Functionally, water channel required to facilitate the transport of water across cell membrane. The chain is Aquaporin TIP2-3 (TIP2-3) from Zea mays (Maize).